Here is a 423-residue protein sequence, read N- to C-terminus: Polyglutamylase complex subunit TTLL1 (423 aa).

Residues 1-367 (MAGKVKWVTD…NGEIPDCKWN (367 aa)) enclose the TTL domain. Residues Lys138, 144-145 (QG), 181-184 (SLYI), and 194-196 (KFD) contribute to the ATP site. Residue Gln144 participates in a protein binding. Arg220 provides a ligand contact to L-glutamate. 241–242 (TN) serves as a coordination point for ATP. An L-glutamate-binding site is contributed by Lys259. Residues Asp313, Glu326, and Asn328 each coordinate Mg(2+). Lys344 contributes to the L-glutamate binding site. A disordered region spans residues 391–423 (GADRELRSRQGQSLGPRAGRSRDSGRAVLTTWK).

This sequence belongs to the tubulin polyglutamylase family. In terms of assembly, part of the neuronal tubulin polyglutamylase complex which contains TPGS1, TPGS2, TTLL1, LRRC49 and NICN1. Interacts with PCM1, CSTPP1 and LRRC49. Requires Mg(2+) as cofactor. Expressed in a wide range of tissues. Has a stronger expression in heart, brain and testis.

The protein resides in the cytoplasm. It is found in the cytoskeleton. It localises to the cilium basal body. The protein localises to the cilium axoneme. Its subcellular location is the cell projection. The protein resides in the cilium. It is found in the flagellum. The enzyme catalyses (L-glutamyl)(n)-gamma-L-glutamyl-L-glutamyl-[protein] + L-glutamate + ATP = (L-glutamyl)(n+1)-gamma-L-glutamyl-L-glutamyl-[protein] + ADP + phosphate + H(+). Catalytic subunit of a polyglutamylase complex which modifies tubulin, generating side chains of glutamate on the gamma-carboxyl group of specific glutamate residues within the C-terminal tail of tubulin. Probably involved in the side-chain elongation step of the polyglutamylation reaction rather than the initiation step. Modifies both alpha- and beta-tubulins with a preference for the alpha-tail. Unlike most polyglutamylases of the tubulin--tyrosine ligase family, only displays a catalytic activity when in complex with other proteins as it is most likely lacking domains important for autonomous activity. Part of the neuronal tubulin polyglutamylase complex. Mediates cilia and flagella polyglutamylation which is essential for their biogenesis and motility. Involved in respiratory motile cilia function through the regulation of beating asymmetry. Essential for sperm flagella biogenesis, motility and male fertility. Involved in KLF4 glutamylation which impedes its ubiquitination, thereby leading to somatic cell reprogramming, pluripotency maintenance and embryogenesis. This chain is Polyglutamylase complex subunit TTLL1, found in Homo sapiens (Human).